The primary structure comprises 179 residues: Large ribosomal subunit protein uL5 (179 aa).

It belongs to the universal ribosomal protein uL5 family. Part of the 50S ribosomal subunit; part of the 5S rRNA/L5/L18/L25 subcomplex. Contacts the 5S rRNA and the P site tRNA. Forms a bridge to the 30S subunit in the 70S ribosome.

Functionally, this is one of the proteins that bind and probably mediate the attachment of the 5S RNA into the large ribosomal subunit, where it forms part of the central protuberance. In the 70S ribosome it contacts protein S13 of the 30S subunit (bridge B1b), connecting the 2 subunits; this bridge is implicated in subunit movement. Contacts the P site tRNA; the 5S rRNA and some of its associated proteins might help stabilize positioning of ribosome-bound tRNAs. The polypeptide is Large ribosomal subunit protein uL5 (Enterococcus faecalis (strain ATCC 700802 / V583)).